Consider the following 512-residue polypeptide: Cercosporin MFS transporter CTB4 (512 aa).

12 helical membrane-spanning segments follow: residues 72-92 (WVIT…SSVF), 110-130 (VVLG…IFWG), 142-162 (LLAG…ARSL), 170-190 (FLGG…LADI), 202-222 (TVGA…SVLV), 230-250 (WIAN…FPFL), 306-326 (ILLM…NFFL), 343-363 (ASLP…LLSF), 383-403 (LLLM…FAWT), 407-427 (TMNP…IHLI), 456-476 (LFAA…GVKW), and 480-500 (ILAL…YFGA).

This sequence belongs to the major facilitator superfamily. CAR1 family.

It is found in the cell membrane. Functionally, MFS transporter; part of the gene cluster that mediates the biosynthesis of cercosporin, a light-activated, non-host-selective toxin. The perylenequinone chromophore of cercosporin absorbs light energy to attain an electronically-activated triplet state and produces active oxygen species such as the hydroxyl radical, superoxide, hydrogen peroxide or singlet oxygen upon reaction with oxygen molecules. These reactive oxygen species cause damage to various cellular components including lipids, proteins and nucleic acids. Responsible for secretion and accumulation of cercosporin, but does not play any roles in self-protection against the toxicity of cercosporin. This is Cercosporin MFS transporter CTB4 from Cercospora nicotianae (Barn spot disease fungus).